The sequence spans 138 residues: MPKFYCDYCDTYLTHDSPSVRKTHCSGRKHKENVRDYYQKWMEEQAQSLIDKTTTAFQQGRIPPNLFSAPPLGGPMIPPPHPSMMGPPPPGMMPVGPPPGMRMPMGGHMPMMPGPPMMRPLPHPMMVPTRPVMPRPDR.

The Matrin-type zinc-finger motif lies at 4 to 36 (FYCDYCDTYLTHDSPSVRKTHCSGRKHKENVRD). Tyrosine 8 carries the post-translational modification Phosphotyrosine. Phosphoserine is present on serine 17. Lysine 52 is subject to N6-acetyllysine. Residues 62 to 99 (IPPNLFSAPPLGGPMIPPPHPSMMGPPPPGMMPVGPPP) are disordered. Pro residues predominate over residues 72-99 (LGGPMIPPPHPSMMGPPPPGMMPVGPPP).

Belongs to the U1 small nuclear ribonucleoprotein C family. Component of the U1 snRNP. The U1 snRNP is composed of the U1 snRNA and the 7 core Sm proteins SNRPB, SNRPD1, SNRPD2, SNRPD3, SNRPE, SNRPF and SNRPG that assemble in a heptameric protein ring on the Sm site of the small nuclear RNA to form the core snRNP, and at least 3 U1 snRNP-specific proteins SNRNP70/U1-70K, SNRPA/U1-A and SNRPC/U1-C. SNRPC/U1-C interacts with U1 snRNA and the 5' splice-site region of the pre-mRNA. Interacts (via N-terminus) with TIA1 (via C-terminus); thereby promoting spliceosomal U1 snRNP recruitment to 5' splice sites.

The protein resides in the nucleus. Functionally, component of the spliceosomal U1 snRNP, which is essential for recognition of the pre-mRNA 5' splice-site and the subsequent assembly of the spliceosome. SNRPC/U1-C is directly involved in initial 5' splice-site recognition for both constitutive and regulated alternative splicing. The interaction with the 5' splice-site seems to precede base-pairing between the pre-mRNA and the U1 snRNA. Stimulates commitment or early (E) complex formation by stabilizing the base pairing of the 5' end of the U1 snRNA and the 5' splice-site region. The chain is U1 small nuclear ribonucleoprotein C from Monodelphis domestica (Gray short-tailed opossum).